A 166-amino-acid polypeptide reads, in one-letter code: Holin-like protein TcdE (166 aa).

The next 4 helical transmembrane spans lie at 15–35, 36–56, 77–97, and 111–131; these read IFFYINLGGVMNMTISFLSEH, IFIKLVILTISFDTLLGCLSA, MIACIFFLSVVDILTKFNFLF, and HLGISEFFSILFILYESVSIL.

The protein belongs to the bacteriophage holin family. Homomultimer.

It localises to the cell membrane. Its function is as follows. Holin-like protein required for secretion of toxins A and B (TcdA and TcdB). Facilitates the release of toxins to the extracellular environment without causing the bacterial cell lysis. Functionally, has weak activity, suggesting that it may act as a antiholin when multiple forms are produced. This Clostridioides difficile (Peptoclostridium difficile) protein is Holin-like protein TcdE.